The following is a 278-amino-acid chain: Non-heme chloroperoxidase (278 aa).

The region spanning 24-259 (PIVFHHGWPL…LKTYPGYSHG (236 aa)) is the AB hydrolase-1 domain. Catalysis depends on residues serine 97, aspartate 229, and histidine 258.

This sequence belongs to the AB hydrolase superfamily. Bacterial non-heme haloperoxidase / perhydrolase family. Homodimer.

Its function is as follows. Chlorinates and brominates suitable organic compounds. Involved in the biosynthesis of the antibiotic pyrrolnitrin. This is Non-heme chloroperoxidase (cpo) from Burkholderia pyrrocinia (Pseudomonas pyrrocinia).